The primary structure comprises 423 residues: Serine--tRNA ligase (423 aa).

229–231 (TAE) contributes to the L-serine binding site. 260 to 262 (RKE) contributes to the ATP binding site. An L-serine-binding site is contributed by Glu283. 347 to 350 (EVSS) provides a ligand contact to ATP. Ser383 contributes to the L-serine binding site.

Belongs to the class-II aminoacyl-tRNA synthetase family. Type-1 seryl-tRNA synthetase subfamily. Homodimer. The tRNA molecule binds across the dimer.

The protein localises to the cytoplasm. The enzyme catalyses tRNA(Ser) + L-serine + ATP = L-seryl-tRNA(Ser) + AMP + diphosphate + H(+). It catalyses the reaction tRNA(Sec) + L-serine + ATP = L-seryl-tRNA(Sec) + AMP + diphosphate + H(+). The protein operates within aminoacyl-tRNA biosynthesis; selenocysteinyl-tRNA(Sec) biosynthesis; L-seryl-tRNA(Sec) from L-serine and tRNA(Sec): step 1/1. Catalyzes the attachment of serine to tRNA(Ser). Is also able to aminoacylate tRNA(Sec) with serine, to form the misacylated tRNA L-seryl-tRNA(Sec), which will be further converted into selenocysteinyl-tRNA(Sec). This is Serine--tRNA ligase from Chloroflexus aurantiacus (strain ATCC 29366 / DSM 635 / J-10-fl).